The chain runs to 597 residues: uncharacterized protein (597 aa).

A Helicase ATP-binding domain is found at L48–T198. Y61–T68 is an ATP binding site. Positions D146–H149 match the DEVH box motif. A Helicase C-terminal domain is found at K275–V467.

It belongs to the helicase family.

The presence of the two linear plasmids, termed pGKL1 and pGKL2, in strains of Kluyveromyces lactis confers the killer phenotype to the host cell, by promoting the secretion of a toxin able to inhibit the growth of sensitive strains. This is an uncharacterized protein from Kluyveromyces lactis (strain ATCC 8585 / CBS 2359 / DSM 70799 / NBRC 1267 / NRRL Y-1140 / WM37) (Yeast).